The chain runs to 507 residues: Solute carrier family 2, facilitated glucose transporter member 6 (507 aa).

Residues 1 to 28 (MQEPLLGAEGPDYDTFPEKPPPSPGDRA) form a disordered region. The Cytoplasmic segment spans residues 1–37 (MQEPLLGAEGPDYDTFPEKPPPSPGDRARVGTLQNKR). The Dileucine internalization motif signature appears at 5–6 (LL). A Phosphoserine modification is found at S23. The helical transmembrane segment at 38 to 58 (VFLATFAAVLGNFSFGYALVY) threads the bilayer. Topologically, residues 59–81 (TSPVIPALERSLDPDLHLTKSQA) are extracellular. A helical transmembrane segment spans residues 82 to 102 (SWFGSVFTLGAAAGGLSAMIL). Topologically, residues 103–111 (NDLLGRKLS) are cytoplasmic. The helical transmembrane segment at 112–132 (IMFSAVPSAAGYALMAGAHGL) threads the bilayer. Topologically, residues 133 to 140 (WMLLLGRT) are extracellular. A helical membrane pass occupies residues 141–161 (LTGFAGGLTAACIPVYVSEIA). Residues 162 to 168 (PPGVRGA) are Cytoplasmic-facing. A helical transmembrane segment spans residues 169–189 (LGATPQLMAVFGSLSLYALGL). A D-hexose is bound at residue Q174. The Extracellular portion of the chain corresponds to 190–194 (LLPWR). A helical transmembrane segment spans residues 195–215 (WLAVAGEAPVLIMILLLSFMP). The Cytoplasmic portion of the chain corresponds to 216–289 (NSPRFLLSRG…LLMRLLQQLT (74 aa)). Position 286–287 (286–287 (QQ)) interacts with a D-hexose. A helical transmembrane segment spans residues 290–310 (GITPILVYLQSIFDSTAVLLP). Residues 311–314 (PKDD) lie on the Extracellular side of the membrane. A helical membrane pass occupies residues 315 to 335 (AAIVGAVRLLSVLIAALTMDL). Over 336–339 (AGRK) the chain is Cytoplasmic. A helical membrane pass occupies residues 340-360 (VLLFVSAAIMFAANLTLGLYI). Residues 361-395 (HFGPRPLSPNSTAGLESESWGDLAQPLAAPAGYLT) are Extracellular-facing. N370 carries N-linked (GlcNAc...) asparagine glycosylation. A helical membrane pass occupies residues 396–416 (LVPLLATMLFIMGYAVGWGPI). Residues 417 to 435 (TWLLMSEVLPLRARGVASG) lie on the Cytoplasmic side of the membrane. W418 provides a ligand contact to a D-hexose. A helical membrane pass occupies residues 436-456 (LCVLASWLTAFVLTKSFLPVV). Residues 457–462 (STFGLQ) are Extracellular-facing. A helical transmembrane segment spans residues 463–483 (VPFFFFAAICLVSLVFTGCCV). Residues 484 to 507 (PETKGRSLEQIESFFRTGRRSFLR) are Cytoplasmic-facing.

The protein belongs to the major facilitator superfamily. Sugar transporter (TC 2.A.1.1) family. Glucose transporter subfamily. Highly expressed in brain, spleen and peripheral blood leukocytes.

It localises to the lysosome membrane. Functionally, probable sugar transporter that acts as a regulator of glycolysis in macrophages. Does not transport glucose. The protein is Solute carrier family 2, facilitated glucose transporter member 6 of Homo sapiens (Human).